Reading from the N-terminus, the 356-residue chain is uncharacterized protein (356 aa).

Position 37-44 (37-44) interacts with NADP(+); that stretch reads TGASSGIG. S168 provides a ligand contact to substrate. The active-site Proton acceptor is Y181.

It belongs to the short-chain dehydrogenases/reductases (SDR) family.

This is an uncharacterized protein from Bacillus subtilis (strain 168).